The sequence spans 356 residues: Peptide chain release factor 1 (356 aa).

N5-methylglutamine is present on Gln233.

It belongs to the prokaryotic/mitochondrial release factor family. Post-translationally, methylated by PrmC. Methylation increases the termination efficiency of RF1.

The protein localises to the cytoplasm. Its function is as follows. Peptide chain release factor 1 directs the termination of translation in response to the peptide chain termination codons UAG and UAA. This chain is Peptide chain release factor 1, found in Syntrophotalea carbinolica (strain DSM 2380 / NBRC 103641 / GraBd1) (Pelobacter carbinolicus).